A 164-amino-acid polypeptide reads, in one-letter code: Protein SprT (164 aa).

The SprT-like domain maps to 13–156 (YQQAEAFFKR…LCRRCREPLV (144 aa)). Position 69 (His69) interacts with Zn(2+). Glu70 is an active-site residue. His73 provides a ligand contact to Zn(2+).

The protein belongs to the SprT family. The cofactor is Zn(2+).

Its subcellular location is the cytoplasm. This Pseudomonas syringae pv. syringae (strain B728a) protein is Protein SprT.